An 879-amino-acid chain; its full sequence is Oxysterol-binding protein-related protein 5 (879 aa).

A disordered region spans residues 1 to 73 (MKEEAFLRRR…TPSSATKVPP (73 aa)). Position 12 is a phosphoserine (serine 12). Residues 93–123 (VTKKETLKAQKENYRQEKKRATRQLLSALTD) adopt a coiled-coil conformation. Positions 126 to 243 (VVIMADSLKI…WLDALELALR (118 aa)) constitute a PH domain. A disordered region spans residues 254–341 (KPGRDGEPGT…TPGAPVRRGT (88 aa)). 2 stretches are compositionally biased toward basic and acidic residues: residues 300 to 309 (FSDKSERENP) and 316 to 325 (TQDHSRKTES). Residues 384-389 (LSRVVL), 446-449 (KPYN), and 478-479 (HH) contribute to the a 1,2-diacyl-sn-glycero-3-phospho-(1D-myo-inositol 4-phosphate) site. Residues 384 to 389 (LSRVVL) and asparagine 449 each bind a 1,2-diacyl-sn-glycero-3-phospho-L-serine. Serine 504 lines the a 1,2-diacyl-sn-glycero-3-phospho-L-serine pocket. The a 1,2-diacyl-sn-glycero-3-phospho-(1D-myo-inositol 4-phosphate) site is built by lysine 670, glutamate 674, and arginine 678. The interval 742-806 (TTFLGSPGPR…FVPGGESPCP (65 aa)) is disordered. At serine 747 the chain carries Phosphoserine. Over residues 750–765 (PRHERSGPDQRLRKAS) the composition is skewed to basic and acidic residues. Positions 766–783 (DQPSGHSQATESSGSTPE) are enriched in polar residues. A helical transmembrane segment spans residues 860–878 (SWFLLCVFLACQLFINHIL).

Belongs to the OSBP family. Ubiquitously expressed.

Its subcellular location is the endoplasmic reticulum membrane. Lipid transporter involved in lipid countertransport between the endoplasmic reticulum and the plasma membrane: specifically exchanges phosphatidylserine with phosphatidylinositol 4-phosphate (PI4P), delivering phosphatidylserine to the plasma membrane in exchange for PI4P, which is degraded by the SAC1/SACM1L phosphatase in the endoplasmic reticulum. Binds phosphatidylserine and PI4P in a mutually exclusive manner. May cooperate with NPC1 to mediate the exit of cholesterol from endosomes/lysosomes. Binds 25-hydroxycholesterol and cholesterol. The sequence is that of Oxysterol-binding protein-related protein 5 (OSBPL5) from Homo sapiens (Human).